We begin with the raw amino-acid sequence, 613 residues long: Glutamyl-tRNA(Gln) amidotransferase subunit E (613 aa).

This sequence belongs to the GatB/GatE family. GatE subfamily. In terms of assembly, heterodimer of GatD and GatE.

It carries out the reaction L-glutamyl-tRNA(Gln) + L-glutamine + ATP + H2O = L-glutaminyl-tRNA(Gln) + L-glutamate + ADP + phosphate + H(+). In terms of biological role, allows the formation of correctly charged Gln-tRNA(Gln) through the transamidation of misacylated Glu-tRNA(Gln) in organisms which lack glutaminyl-tRNA synthetase. The reaction takes place in the presence of glutamine and ATP through an activated gamma-phospho-Glu-tRNA(Gln). The GatDE system is specific for glutamate and does not act on aspartate. The chain is Glutamyl-tRNA(Gln) amidotransferase subunit E from Archaeoglobus fulgidus (strain ATCC 49558 / DSM 4304 / JCM 9628 / NBRC 100126 / VC-16).